Here is a 504-residue protein sequence, read N- to C-terminus: Probable cytochrome P450 305a1 (504 aa).

Cys-450 contacts heme.

Belongs to the cytochrome P450 family. Heme is required as a cofactor.

Its subcellular location is the endoplasmic reticulum membrane. It is found in the microsome membrane. Functionally, may be involved in the metabolism of insect hormones and in the breakdown of synthetic insecticides. This is Probable cytochrome P450 305a1 (Cyp305a1) from Drosophila melanogaster (Fruit fly).